A 214-amino-acid polypeptide reads, in one-letter code: Thiamine-phosphate synthase (214 aa).

Residues 39-43 and Asn-71 each bind 4-amino-2-methyl-5-(diphosphooxymethyl)pyrimidine; that span reads QYRFK. Residues Asp-72 and Asp-91 each contribute to the Mg(2+) site. Ser-110 provides a ligand contact to 4-amino-2-methyl-5-(diphosphooxymethyl)pyrimidine. A 2-[(2R,5Z)-2-carboxy-4-methylthiazol-5(2H)-ylidene]ethyl phosphate-binding site is contributed by 136–138; that stretch reads TKT. Lys-139 is a binding site for 4-amino-2-methyl-5-(diphosphooxymethyl)pyrimidine. 2-[(2R,5Z)-2-carboxy-4-methylthiazol-5(2H)-ylidene]ethyl phosphate is bound by residues Gly-166 and 186–187; that span reads VS.

This sequence belongs to the thiamine-phosphate synthase family. It depends on Mg(2+) as a cofactor.

It carries out the reaction 2-[(2R,5Z)-2-carboxy-4-methylthiazol-5(2H)-ylidene]ethyl phosphate + 4-amino-2-methyl-5-(diphosphooxymethyl)pyrimidine + 2 H(+) = thiamine phosphate + CO2 + diphosphate. The enzyme catalyses 2-(2-carboxy-4-methylthiazol-5-yl)ethyl phosphate + 4-amino-2-methyl-5-(diphosphooxymethyl)pyrimidine + 2 H(+) = thiamine phosphate + CO2 + diphosphate. The catalysed reaction is 4-methyl-5-(2-phosphooxyethyl)-thiazole + 4-amino-2-methyl-5-(diphosphooxymethyl)pyrimidine + H(+) = thiamine phosphate + diphosphate. Its pathway is cofactor biosynthesis; thiamine diphosphate biosynthesis; thiamine phosphate from 4-amino-2-methyl-5-diphosphomethylpyrimidine and 4-methyl-5-(2-phosphoethyl)-thiazole: step 1/1. Its function is as follows. Condenses 4-methyl-5-(beta-hydroxyethyl)thiazole monophosphate (THZ-P) and 2-methyl-4-amino-5-hydroxymethyl pyrimidine pyrophosphate (HMP-PP) to form thiamine monophosphate (TMP). This Hydrogenobaculum sp. (strain Y04AAS1) protein is Thiamine-phosphate synthase.